A 311-amino-acid polypeptide reads, in one-letter code: Malate dehydrogenase (311 aa).

NAD(+)-binding positions include 7–13 (GAAGGIG) and aspartate 34. Arginine 81 and arginine 87 together coordinate substrate. Residues asparagine 94 and 117 to 119 (ITN) each bind NAD(+). 2 residues coordinate substrate: asparagine 119 and arginine 153. Histidine 177 acts as the Proton acceptor in catalysis. Methionine 227 contacts NAD(+).

The protein belongs to the LDH/MDH superfamily. MDH type 1 family. In terms of assembly, homodimer.

It carries out the reaction (S)-malate + NAD(+) = oxaloacetate + NADH + H(+). Its function is as follows. Catalyzes the reversible oxidation of malate to oxaloacetate. This is Malate dehydrogenase from Aeromonas hydrophila subsp. hydrophila (strain ATCC 7966 / DSM 30187 / BCRC 13018 / CCUG 14551 / JCM 1027 / KCTC 2358 / NCIMB 9240 / NCTC 8049).